A 242-amino-acid polypeptide reads, in one-letter code: Probable pectate lyase D (242 aa).

Residues 1 to 17 form the signal peptide; sequence MYQKSLLFSLLASSALA. The N-linked (GlcNAc...) asparagine glycan is linked to Asn216. Residues 217-242 form a disordered region; the sequence is DTGAEPEEISEGPSDACQYSEPLSSC.

Belongs to the polysaccharide lyase 3 family. Requires Ca(2+) as cofactor.

It is found in the secreted. It catalyses the reaction Eliminative cleavage of (1-&gt;4)-alpha-D-galacturonan to give oligosaccharides with 4-deoxy-alpha-D-galact-4-enuronosyl groups at their non-reducing ends.. Its function is as follows. Pectinolytic enzyme consist of four classes of enzymes: pectin lyase, polygalacturonase, pectin methylesterase and rhamnogalacturonase. Among pectinolytic enzymes, pectin lyase is the most important in depolymerization of pectin, since it cleaves internal glycosidic bonds of highly methylated pectins. Favors pectate, the anion, over pectin, the methyl ester. The chain is Probable pectate lyase D (plyD) from Aspergillus fumigatus (strain CBS 144.89 / FGSC A1163 / CEA10) (Neosartorya fumigata).